Here is a 155-residue protein sequence, read N- to C-terminus: Small ribosomal subunit protein uS7 (155 aa).

This sequence belongs to the universal ribosomal protein uS7 family. In terms of assembly, part of the 30S ribosomal subunit. Contacts proteins S9 and S11.

Its function is as follows. One of the primary rRNA binding proteins, it binds directly to 16S rRNA where it nucleates assembly of the head domain of the 30S subunit. Is located at the subunit interface close to the decoding center, probably blocks exit of the E-site tRNA. In Thermotoga maritima (strain ATCC 43589 / DSM 3109 / JCM 10099 / NBRC 100826 / MSB8), this protein is Small ribosomal subunit protein uS7.